A 318-amino-acid chain; its full sequence is Transcription factor FER-LIKE IRON DEFICIENCY-INDUCED TRANSCRIPTION FACTOR (318 aa).

Residues 90–138 (FDGDSVRAGGEEDEEDYNDGDDSSATTTNNDGTRKTKTDRSRTLISERR) form a disordered region. Positions 100 to 111 (EEDEEDYNDGDD) are enriched in acidic residues. Residues 121-136 (GTRKTKTDRSRTLISE) show a composition bias toward basic and acidic residues. Positions 127-176 (TDRSRTLISERRRRGRMKDKLYALRSLVPNITKMDKASIVGDAVLYVQEL) constitute a bHLH domain.

Homodimer. As to expression, expressed in roots and inflorescence, and to a lower extent, in leaves and stems. In roots, confined to the outer cell layers, specifically in the differentiation zone. Also detected in the endodermis and inner tissues of the central cylinder.

It is found in the nucleus. Transcription factor. Essential protein involved in iron uptake responses. Regulates FRO2 at the level of mRNA accumulation and IRT1 at the level of protein accumulation. Confers enhanced iron mobilization responses at low iron supply. This is Transcription factor FER-LIKE IRON DEFICIENCY-INDUCED TRANSCRIPTION FACTOR (FIT) from Arabidopsis thaliana (Mouse-ear cress).